Consider the following 289-residue polypeptide: S-methyl-5'-thioadenosine phosphorylase (289 aa).

Phosphate is bound by residues S11, 53–54, and 86–87; these read RH and SA. M187 lines the substrate pocket. Residue T188 participates in phosphate binding. Substrate is bound at residue 211–213; the sequence is DYD.

The protein belongs to the PNP/MTAP phosphorylase family. MTAP subfamily. Homohexamer. Dimer of a homotrimer.

The catalysed reaction is S-methyl-5'-thioadenosine + phosphate = 5-(methylsulfanyl)-alpha-D-ribose 1-phosphate + adenine. The protein operates within amino-acid biosynthesis; L-methionine biosynthesis via salvage pathway; S-methyl-5-thio-alpha-D-ribose 1-phosphate from S-methyl-5'-thioadenosine (phosphorylase route): step 1/1. Its function is as follows. Catalyzes the reversible phosphorylation of S-methyl-5'-thioadenosine (MTA) to adenine and 5-methylthioribose-1-phosphate. Involved in the breakdown of MTA, a major by-product of polyamine biosynthesis. Responsible for the first step in the methionine salvage pathway after MTA has been generated from S-adenosylmethionine. Has broad substrate specificity with 6-aminopurine nucleosides as preferred substrates. The sequence is that of S-methyl-5'-thioadenosine phosphorylase from Thermosynechococcus vestitus (strain NIES-2133 / IAM M-273 / BP-1).